A 336-amino-acid polypeptide reads, in one-letter code: Holliday junction branch migration complex subunit RuvB (336 aa).

The interval 4–185 (ADRLISADIQ…FGIVQRLEFY (182 aa)) is large ATPase domain (RuvB-L). ATP-binding positions include Ile-24, Arg-25, Gly-66, Lys-69, Thr-70, Thr-71, 132–134 (EDY), Arg-175, Tyr-185, and Arg-222. Thr-70 is a binding site for Mg(2+). The small ATPAse domain (RuvB-S) stretch occupies residues 186–256 (NVDDLQHIVA…IASKALDMLN (71 aa)). A head domain (RuvB-H) region spans residues 259 to 336 (AAGFDYLDRK…RHFNRIMEAP (78 aa)). Residues Arg-295, Arg-314, and Arg-319 each coordinate DNA.

It belongs to the RuvB family. In terms of assembly, homohexamer. Forms an RuvA(8)-RuvB(12)-Holliday junction (HJ) complex. HJ DNA is sandwiched between 2 RuvA tetramers; dsDNA enters through RuvA and exits via RuvB. An RuvB hexamer assembles on each DNA strand where it exits the tetramer. Each RuvB hexamer is contacted by two RuvA subunits (via domain III) on 2 adjacent RuvB subunits; this complex drives branch migration. In the full resolvosome a probable DNA-RuvA(4)-RuvB(12)-RuvC(2) complex forms which resolves the HJ.

The protein resides in the cytoplasm. The catalysed reaction is ATP + H2O = ADP + phosphate + H(+). The RuvA-RuvB-RuvC complex processes Holliday junction (HJ) DNA during genetic recombination and DNA repair, while the RuvA-RuvB complex plays an important role in the rescue of blocked DNA replication forks via replication fork reversal (RFR). RuvA specifically binds to HJ cruciform DNA, conferring on it an open structure. The RuvB hexamer acts as an ATP-dependent pump, pulling dsDNA into and through the RuvAB complex. RuvB forms 2 homohexamers on either side of HJ DNA bound by 1 or 2 RuvA tetramers; 4 subunits per hexamer contact DNA at a time. Coordinated motions by a converter formed by DNA-disengaged RuvB subunits stimulates ATP hydrolysis and nucleotide exchange. Immobilization of the converter enables RuvB to convert the ATP-contained energy into a lever motion, pulling 2 nucleotides of DNA out of the RuvA tetramer per ATP hydrolyzed, thus driving DNA branch migration. The RuvB motors rotate together with the DNA substrate, which together with the progressing nucleotide cycle form the mechanistic basis for DNA recombination by continuous HJ branch migration. Branch migration allows RuvC to scan DNA until it finds its consensus sequence, where it cleaves and resolves cruciform DNA. This is Holliday junction branch migration complex subunit RuvB from Proteus mirabilis (strain HI4320).